We begin with the raw amino-acid sequence, 560 residues long: Formate--tetrahydrofolate ligase (560 aa).

Residue 69–76 participates in ATP binding; the sequence is TPAGEGKS.

It belongs to the formate--tetrahydrofolate ligase family.

The enzyme catalyses (6S)-5,6,7,8-tetrahydrofolate + formate + ATP = (6R)-10-formyltetrahydrofolate + ADP + phosphate. The protein operates within one-carbon metabolism; tetrahydrofolate interconversion. The sequence is that of Formate--tetrahydrofolate ligase from Listeria monocytogenes serovar 1/2a (strain ATCC BAA-679 / EGD-e).